The sequence spans 795 residues: Phenylalanine--tRNA ligase beta subunit (795 aa).

Residues 39 to 148 (AGVFDGVKVG…ENAPIGMDFR (110 aa)) enclose the tRNA-binding domain. The region spanning 401–476 (PKPNQVALRR…RIYGYNNIPN (76 aa)) is the B5 domain. 4 residues coordinate Mg(2+): aspartate 454, aspartate 460, glutamate 463, and glutamate 464. The 94-residue stretch at 701 to 794 (SKFPANRRDI…VSAQFGAALR (94 aa)) folds into the FDX-ACB domain.

Belongs to the phenylalanyl-tRNA synthetase beta subunit family. Type 1 subfamily. In terms of assembly, tetramer of two alpha and two beta subunits. Mg(2+) serves as cofactor.

It is found in the cytoplasm. It carries out the reaction tRNA(Phe) + L-phenylalanine + ATP = L-phenylalanyl-tRNA(Phe) + AMP + diphosphate + H(+). This Vibrio cholerae serotype O1 (strain ATCC 39315 / El Tor Inaba N16961) protein is Phenylalanine--tRNA ligase beta subunit (pheT).